Reading from the N-terminus, the 552-residue chain is MTARGAAGRCPSSTWLGSRLLLVCLLMSRSIAKEVSEHCSHMIGNGHLKVLQQLIDSQMETSCQIAFEFVDQEQLDDPVCYLKKAFFLVQDIIDETMRFKDNTPNANATERLQELSNNLNSCFTKDYEEQNKACVRTFHETPLQLLEKIKNFFNETKNLLEKDWNIFTKNCNNSFAKCSSRDVVTKPDCNCLYPKATPSSDPASASPHQPPAPSMAPLAGLAWDDSQRTEGSSLLPSELPLRIEDPGSAKQRPPRSTCQTLESTEQPNHGDRLTEDSQPHPSAGGPVPGVEDILESSLGTNWVLEEASGEASEGFLTQEAKFSPSTPVGGSIQAETDRPRALSASPFPKSTEDQKPVDITDRPLTEVNPMRPIGQTQNNTPEKTDGTSTLREDHQEPGSPHIATPNPQRVSNSATPVAQLLLPKSHSWGIVLPLGELEGKRSTRDRRSPAELEGGSASEGAARPVARFNSIPLTDTGHVEQHEGSSDPQIPESVFHLLVPGIILVLLTVGGLLFYKWKWRSHRDPQTLDSSVGRPEDSSLTQDEDRQVELPV.

The signal sequence occupies residues 1 to 32 (MTARGAAGRCPSSTWLGSRLLLVCLLMSRSIA). Over 33 to 492 (KEVSEHCSHM…EGSSDPQIPE (460 aa)) the chain is Extracellular. 3 cysteine pairs are disulfide-bonded: Cys39–Cys122, Cys80–Cys171, and Cys134–Cys178. N-linked (GlcNAc...) asparagine glycosylation is found at Asn107, Asn154, and Asn172. A compositionally biased stretch (low complexity) spans 197 to 207 (TPSSDPASASP). A disordered region spans residues 197–293 (TPSSDPASAS…GGPVPGVEDI (97 aa)). The segment covering 254–267 (PRSTCQTLESTEQP) has biased composition (polar residues). Positions 268–278 (NHGDRLTEDSQ) are enriched in basic and acidic residues. O-linked (Xyl...) (chondroitin sulfate) serine glycosylation is present at Ser308. Disordered stretches follow at residues 321-412 (KFSP…RVSN) and 439-465 (GKRSTRDRRSPAELEGGSASEGAARPV). Basic and acidic residues-rich tracts occupy residues 350 to 364 (STEDQKPVDITDRPL), 382 to 396 (EKTDGTSTLREDHQE), and 439 to 450 (GKRSTRDRRSPA). O-linked (GalNAc...) threonine glycosylation is present at Thr360. The helical transmembrane segment at 493-515 (SVFHLLVPGIILVLLTVGGLLFY) threads the bilayer. The Cytoplasmic portion of the chain corresponds to 516 to 552 (KWKWRSHRDPQTLDSSVGRPEDSSLTQDEDRQVELPV). Residues 525 to 552 (PQTLDSSVGRPEDSSLTQDEDRQVELPV) are disordered. A compositionally biased stretch (basic and acidic residues) spans 543–552 (DEDRQVELPV).

As to quaternary structure, homodimer or heterodimer; disulfide-linked. Likely to exist in multiple forms: homodimer consisting of 2 identical 150-200 kDa proteoglycan subunits, heterodimer consisting of a 150-200 kDa proteoglycan subunit and a truncated 43 kDa subunit, and homodimer consisting of 2 identical 43 kDa subunits. Interacts with CSF1R. Post-translationally, N-glycosylated. In terms of processing, O-glycosylated; contains chondroitin sulfate.

It is found in the cell membrane. It localises to the secreted. The protein resides in the extracellular space. Cytokine that plays an essential role in the regulation of survival, proliferation and differentiation of hematopoietic precursor cells, especially mononuclear phagocytes, such as macrophages and monocytes. Promotes the release of pro-inflammatory chemokines, and thereby plays an important role in innate immunity and in inflammatory processes. Plays an important role in the regulation of osteoclast proliferation and differentiation, the regulation of bone resorption, and is required for normal bone development. Required for normal male and female fertility. Promotes reorganization of the actin cytoskeleton, regulates formation of membrane ruffles, cell adhesion and cell migration. Plays a role in lipoprotein clearance. This chain is Macrophage colony-stimulating factor 1 (Csf1), found in Mus musculus (Mouse).